Reading from the N-terminus, the 186-residue chain is Putative 5'(3')-deoxyribonucleotidase (186 aa).

Asp6 serves as the catalytic Nucleophile. Mg(2+) is bound by residues Asp6, Asp8, and Asp137. The Proton donor role is filled by Asp8.

The protein belongs to the 5'(3')-deoxyribonucleotidase family. The cofactor is Mg(2+).

Functionally, dephosphorylates the 5' and 2'(3')-phosphates of deoxyribonucleotides. The sequence is that of Putative 5'(3')-deoxyribonucleotidase from Bordetella pertussis (strain Tohama I / ATCC BAA-589 / NCTC 13251).